A 1010-amino-acid chain; its full sequence is Polyhomeotic-like protein 1 (1010 aa).

The span at 1-22 (METESEQNSSSTNGSSSSGASS) shows a compositional bias: low complexity. Disordered regions lie at residues 1 to 25 (METE…SRPQ), 212 to 243 (NQQA…LSQT), 259 to 312 (GQSL…TGVV), 444 to 506 (QQQG…SKPP), 565 to 588 (GAVQ…PGAL), and 646 to 678 (KRKA…SPKV). Over residues 212 to 228 (NQQASAQGPQMPGSTQK) the composition is skewed to polar residues. A compositionally biased stretch (gly residues) spans 279-292 (MGPGGGGQAPGGLG). Positions 453–463 (PQPPQVPPTQQ) are enriched in pro residues. The span at 464 to 480 (VPPSQSQQQAQTLVVQP) shows a compositional bias: low complexity. The span at 488–500 (TLPPEPTSKPPIP) shows a compositional bias: pro residues. The segment covering 575 to 587 (ASSPPSSQAAPGA) has biased composition (low complexity). Ser651 is modified (phosphoserine). Lys769 participates in a covalent cross-link: Glycyl lysine isopeptide (Lys-Gly) (interchain with G-Cter in SUMO2). A disordered region spans residues 772–794 (QAGLPTGLNESQPSGPLGGDSPS). The segment at 797–831 (LEKKANLLKCEYCGKYAPAEQFRGSKRFCSMTCAK) adopts an FCS-type zinc-finger fold. Zn(2+)-binding residues include Cys806, Cys809, Cys825, and Cys829. Residues 854–928 (ASYARVRRRG…LGNTITTPST (75 aa)) are disordered. Phosphoserine is present on Ser904. Thr928 is subject to Phosphothreonine. Residues 946-1010 (WSVEEVYEFI…CAKINVLKET (65 aa)) form the SAM domain.

Homodimer. Component of a PRC1-like complex. Interacts with the SAM domain of SCMH1 via its SAM domain in vitro. Interacts with RNF2 and CBX7. Interacts with PHC2. Interacts with BMI1. In terms of tissue distribution, highly expressed in testis with lower levels in most other tissues. Expressed in embryonic stem cells.

Its subcellular location is the nucleus. Functionally, component of a Polycomb group (PcG) multiprotein PRC1-like complex, a complex class required to maintain the transcriptionally repressive state of many genes, including Hox genes, throughout development. PcG PRC1 complex acts via chromatin remodeling and modification of histones; it mediates monoubiquitination of histone H2A 'Lys-119', rendering chromatin heritably changed in its expressibility. Required for proper control of cellular levels of GMNN expression. This is Polyhomeotic-like protein 1 from Mus musculus (Mouse).